We begin with the raw amino-acid sequence, 455 residues long: Ectonucleoside triphosphate diphosphohydrolase 6 (455 aa).

At 1–12 (MRKIPNHGTLRM) the chain is on the cytoplasmic side. A helical; Signal-anchor for type II membrane protein transmembrane segment spans residues 13–32 (TKVAYPLGLCVGLFIYVAYI). Residues 33–455 (KWHRASAAQA…SLKRQKVPAL (423 aa)) lie on the Lumenal side of the membrane. The N-linked (GlcNAc...) asparagine glycan is linked to Asn-192. Glu-196 serves as the catalytic Proton acceptor. Asn-256 carries an N-linked (GlcNAc...) asparagine glycan. Cystine bridges form between Cys-297/Cys-327 and Cys-387/Cys-401.

The protein belongs to the GDA1/CD39 NTPase family. Ca(2+) is required as a cofactor. Mg(2+) serves as cofactor. Post-translationally, might be cleaved at the N-terminus, retained in an intracellular membrane compartment and in addition be released into the extracellular medium. In terms of processing, N-glycosylated. In terms of tissue distribution, expressed in heart and brain.

It localises to the golgi apparatus membrane. It is found in the secreted. Its subcellular location is the cell membrane. It carries out the reaction a ribonucleoside 5'-diphosphate + H2O = a ribonucleoside 5'-phosphate + phosphate + H(+). It catalyses the reaction IDP + H2O = IMP + phosphate + H(+). The enzyme catalyses GDP + H2O = GMP + phosphate + H(+). The catalysed reaction is UDP + H2O = UMP + phosphate + H(+). Its function is as follows. Catalyzes the hydrolysis of nucleoside triphosphates and diphosphates in a calcium- or magnesium-dependent manner. Has a strong preference for nucleoside diphosphates, preferentially hydrolyzes GDP, IDP, and UDP, with slower hydrolysis of CDP, ITP, GTP, CTP, ADP, and UTP and virtually no hydrolysis of ATP. The membrane bound form might support glycosylation reactions in the Golgi apparatus and, when released from cells, might catalyze the hydrolysis of extracellular nucleotides. This is Ectonucleoside triphosphate diphosphohydrolase 6 (Entpd6) from Rattus norvegicus (Rat).